The primary structure comprises 197 residues: Nucleoid occlusion factor SlmA (197 aa).

Residues 7-67 (INRREHILQC…GLIEFIEESL (61 aa)) form the HTH tetR-type domain. The H-T-H motif DNA-binding region spans 30–49 (TTAKLASEVGVSEAALYRHF).

It belongs to the nucleoid occlusion factor SlmA family. As to quaternary structure, homodimer. Interacts with FtsZ.

Its subcellular location is the cytoplasm. The protein resides in the nucleoid. Required for nucleoid occlusion (NO) phenomenon, which prevents Z-ring formation and cell division over the nucleoid. Acts as a DNA-associated cell division inhibitor that binds simultaneously chromosomal DNA and FtsZ, and disrupts the assembly of FtsZ polymers. SlmA-DNA-binding sequences (SBS) are dispersed on non-Ter regions of the chromosome, preventing FtsZ polymerization at these regions. The polypeptide is Nucleoid occlusion factor SlmA (Shewanella sp. (strain MR-7)).